The primary structure comprises 295 residues: Chromatin modification-related protein YNG2 (295 aa).

The disordered stretch occupies residues 151 to 208 (NGTAGSGSSSGRKRPASSSSANGKGQKRKQQKKERSRSHQRAGTVSRDVSPNAGIGRD). The span at 156–171 (SGSSSGRKRPASSSSA) shows a compositional bias: low complexity. Residues 175-190 (GQKRKQQKKERSRSHQ) show a composition bias toward basic residues. A PHD-type zinc finger spans residues 233-282 (QLYCFCQRVSYGEMVACDGPNCKYEWFHYSCVNLTEPPKGQWYCPECRLE). Zn(2+)-binding residues include Cys236, Cys238, Cys249, Cys254, His260, Cys263, Cys276, and Cys279.

This sequence belongs to the ING family. As to quaternary structure, interacts with H3K4me3 and to a lesser extent with H3K4me2. Component of the NuA4 histone acetyltransferase complex.

Its subcellular location is the nucleus. In terms of biological role, component of the NuA4 histone acetyltransferase complex which is involved in transcriptional activation of selected genes principally by acetylation of nucleosomal histone H4 and H2A. The NuA4 complex is also involved in DNA repair. Involved in cell cycle progression and meiosis. This is Chromatin modification-related protein YNG2 (YNG2) from Kluyveromyces lactis (strain ATCC 8585 / CBS 2359 / DSM 70799 / NBRC 1267 / NRRL Y-1140 / WM37) (Yeast).